A 197-amino-acid polypeptide reads, in one-letter code: Thymidine kinase (197 aa).

ATP-binding positions include 9–16 (SAMDAGKT) and 87–90 (DEIH). Catalysis depends on E88, which acts as the Proton acceptor. Positions 145, 147, 187, and 190 each coordinate Zn(2+).

The protein belongs to the thymidine kinase family. In terms of assembly, homotetramer.

It is found in the cytoplasm. The enzyme catalyses thymidine + ATP = dTMP + ADP + H(+). The protein is Thymidine kinase of Francisella tularensis subsp. tularensis (strain SCHU S4 / Schu 4).